Reading from the N-terminus, the 303-residue chain is Protein-lysine N-methyltransferase rrg1 (303 aa).

Residues Trp117, 143–145 (GAG), Asp165, Trp198, and Ser221 each bind S-adenosyl-L-methionine.

It belongs to the class I-like SAM-binding methyltransferase superfamily. METTL21 family.

It localises to the cytoplasm. Its subcellular location is the nucleus. S-adenosyl-L-methionine-dependent protein-lysine N-methyltransferase that methylates elongation factor 2 and elongation factor 3A. This chain is Protein-lysine N-methyltransferase rrg1, found in Schizosaccharomyces pombe (strain 972 / ATCC 24843) (Fission yeast).